A 169-amino-acid chain; its full sequence is Chorismate pyruvate-lyase (169 aa).

Substrate is bound by residues Met-37, Arg-79, Leu-117, and Glu-158.

The protein belongs to the UbiC family. Monomer.

The protein localises to the cytoplasm. The enzyme catalyses chorismate = 4-hydroxybenzoate + pyruvate. Its pathway is cofactor biosynthesis; ubiquinone biosynthesis. Its function is as follows. Removes the pyruvyl group from chorismate, with concomitant aromatization of the ring, to provide 4-hydroxybenzoate (4HB) for the ubiquinone pathway. The chain is Chorismate pyruvate-lyase from Proteus mirabilis (strain HI4320).